Reading from the N-terminus, the 163-residue chain is Cytochrome b6-f complex subunit 4 (163 aa).

The next 3 membrane-spanning stretches (helical) occupy residues 36–56 (LLYI…GLAV), 95–115 (LLGV…PFLE), and 131–151 (TVFL…TLPI).

Belongs to the cytochrome b family. PetD subfamily. In terms of assembly, the 4 large subunits of the cytochrome b6-f complex are cytochrome b6, subunit IV (17 kDa polypeptide, petD), cytochrome f and the Rieske protein, while the 4 small subunits are petG, petL, petM and petN. The complex functions as a dimer.

It is found in the plastid. Its subcellular location is the chloroplast thylakoid membrane. Functionally, component of the cytochrome b6-f complex, which mediates electron transfer between photosystem II (PSII) and photosystem I (PSI), cyclic electron flow around PSI, and state transitions. The sequence is that of Cytochrome b6-f complex subunit 4 from Drimys granadensis.